The following is a 180-amino-acid chain: Large ribosomal subunit protein uL5 (180 aa).

This sequence belongs to the universal ribosomal protein uL5 family. In terms of assembly, part of the 50S ribosomal subunit; part of the 5S rRNA/L5/L18/L25 subcomplex. Contacts the 5S rRNA and the P site tRNA. Forms a bridge to the 30S subunit in the 70S ribosome.

This is one of the proteins that bind and probably mediate the attachment of the 5S RNA into the large ribosomal subunit, where it forms part of the central protuberance. In the 70S ribosome it contacts protein S13 of the 30S subunit (bridge B1b), connecting the 2 subunits; this bridge is implicated in subunit movement. Contacts the P site tRNA; the 5S rRNA and some of its associated proteins might help stabilize positioning of ribosome-bound tRNAs. This is Large ribosomal subunit protein uL5 from Rubrobacter xylanophilus (strain DSM 9941 / JCM 11954 / NBRC 16129 / PRD-1).